The primary structure comprises 1034 residues: Probable isoleucine--tRNA ligase, mitochondrial (1034 aa).

Residues 1–32 constitute a mitochondrion transit peptide; it reads MISLNNSFFNKRVIVNSFNNYKRSFGTKSQNE. The 'HIGH' region signature appears at 94 to 104; sequence PYANGDLHMGH. The short motif at 655 to 659 is the 'KMSKS' region element; sequence KMSKS. K658 serves as a coordination point for ATP.

It belongs to the class-I aminoacyl-tRNA synthetase family.

The protein resides in the mitochondrion matrix. The enzyme catalyses tRNA(Ile) + L-isoleucine + ATP = L-isoleucyl-tRNA(Ile) + AMP + diphosphate. The chain is Probable isoleucine--tRNA ligase, mitochondrial (mileS) from Dictyostelium discoideum (Social amoeba).